The primary structure comprises 165 residues: Transcription elongation factor GreA (165 aa).

Residues 55 to 78 (AAKEEQGKQELRVRQLTQLLESAK) are a coiled coil.

This sequence belongs to the GreA/GreB family.

Its function is as follows. Necessary for efficient RNA polymerase transcription elongation past template-encoded arresting sites. The arresting sites in DNA have the property of trapping a certain fraction of elongating RNA polymerases that pass through, resulting in locked ternary complexes. Cleavage of the nascent transcript by cleavage factors such as GreA or GreB allows the resumption of elongation from the new 3'terminus. GreA releases sequences of 2 to 3 nucleotides. The chain is Transcription elongation factor GreA from Streptomyces coelicolor (strain ATCC BAA-471 / A3(2) / M145).